A 168-amino-acid chain; its full sequence is NADH dehydrogenase [ubiquinone] 1 alpha subcomplex assembly factor 2 (168 aa).

The segment covering Lys-108–Lys-118 has biased composition (basic and acidic residues). The interval Lys-108–Gln-168 is disordered. Ser-133 is subject to Phosphoserine. Residues Glu-144 to Pro-155 are compositionally biased toward polar residues.

The protein belongs to the complex I NDUFA12 subunit family. In terms of assembly, interacts with ARMC9.

Its subcellular location is the mitochondrion. Its function is as follows. Acts as a molecular chaperone for mitochondrial complex I assembly. Complex I functions in the transfer of electrons from NADH to the respiratory chain. The immediate electron acceptor for the enzyme is believed to be ubiquinone. Is involved in the initial steps of cilia formation, including removal of CP110 from the mother centrioles, docking of membrane vesicles to the mother centrioles, and establishment of the transition zone. In Bos taurus (Bovine), this protein is NADH dehydrogenase [ubiquinone] 1 alpha subcomplex assembly factor 2 (NDUFAF2).